A 368-amino-acid polypeptide reads, in one-letter code: Repressor ROX1 (368 aa).

Residues 10–83 (IPRPKNAFIL…EHERKYPEYK (74 aa)) constitute a DNA-binding region (HMG box). 2 disordered regions span residues 100–121 (IEQQQQQQQKEQQQQKQSQPQL) and 242–273 (SSQTPVTTTTTSTTTATSSPGKFSSSPNSSVL). The segment covering 102 to 121 (QQQQQQQKEQQQQKQSQPQL) has biased composition (low complexity).

It is found in the nucleus. Its function is as follows. Transcription factor that represses the expression of HEM13, COX5B, ANB1, CYC7 or AAC3 (hypoxic function). Binds to the DNA sequence 5'-RRRTAACAAGAG-3'. The polypeptide is Repressor ROX1 (ROX1) (Saccharomyces cerevisiae (strain ATCC 204508 / S288c) (Baker's yeast)).